Here is a 464-residue protein sequence, read N- to C-terminus: MPDNNVGRVVQVIGPVIDIKFDSDCLPNIYNAIEIDMGDRILITEVEQHIGDDVVRTIAMESTEGLKRGMKAVNTEKPISVPVGSEILGRLFNVLGKTIDEEGEFKAEEYYPIHRPAPTFEEQSVEPEMFETGIKVIDLIAPYQKGGKIGLFGGAGVGKTVLIQELINNIAKEHGGLSVFTGVGERTREGNDLYYEMKESGVINKTALVFGQMNEPPGARMRVALTGLTMAEYFRDQGQNVLLFIDNIFRFTQAGSEVSALLGRIPSAVGYQPTLATEMGALQERITSTKHGSITSVQAVYVPADDLTDPAPATTFAHLDATTVLSRSIAELGIYPAVDPLESTSRILDPRVIGQEHYDVAINVKHILERYKELQDIIAILGVDELSEEDKLVVSRARKVQRFLSQPFTVAEQFTGMKGKFVPVKETVRGFKEIIEGKYDDVPEAAFLFVGSIEEALEKAKTMS.

153-160 (GGAGVGKT) provides a ligand contact to ATP.

Belongs to the ATPase alpha/beta chains family. As to quaternary structure, F-type ATPases have 2 components, CF(1) - the catalytic core - and CF(0) - the membrane proton channel. CF(1) has five subunits: alpha(3), beta(3), gamma(1), delta(1), epsilon(1). CF(0) has three main subunits: a(1), b(2) and c(9-12). The alpha and beta chains form an alternating ring which encloses part of the gamma chain. CF(1) is attached to CF(0) by a central stalk formed by the gamma and epsilon chains, while a peripheral stalk is formed by the delta and b chains.

The protein localises to the cell membrane. It carries out the reaction ATP + H2O + 4 H(+)(in) = ADP + phosphate + 5 H(+)(out). In terms of biological role, produces ATP from ADP in the presence of a proton gradient across the membrane. The catalytic sites are hosted primarily by the beta subunits. The sequence is that of ATP synthase subunit beta from Clostridium novyi (strain NT).